A 228-amino-acid chain; its full sequence is uncharacterized protein (228 aa).

Positions 90–115 (TDESEESSSANNTTTTASHTLSNSKK) are disordered. A compositionally biased stretch (low complexity) spans 96–113 (SSSANNTTTTASHTLSNS).

The protein localises to the cytoplasm. It is found in the cell cortex. Its function is as follows. Deletion results in antifungal drug fluconazole-resistant phenotype. This is an uncharacterized protein from Saccharomyces cerevisiae (strain ATCC 204508 / S288c) (Baker's yeast).